A 414-amino-acid polypeptide reads, in one-letter code: Gamma-glutamyl phosphate reductase (414 aa).

The protein belongs to the gamma-glutamyl phosphate reductase family.

The protein localises to the cytoplasm. It catalyses the reaction L-glutamate 5-semialdehyde + phosphate + NADP(+) = L-glutamyl 5-phosphate + NADPH + H(+). It functions in the pathway amino-acid biosynthesis; L-proline biosynthesis; L-glutamate 5-semialdehyde from L-glutamate: step 2/2. Functionally, catalyzes the NADPH-dependent reduction of L-glutamate 5-phosphate into L-glutamate 5-semialdehyde and phosphate. The product spontaneously undergoes cyclization to form 1-pyrroline-5-carboxylate. In Xanthomonas axonopodis pv. citri (strain 306), this protein is Gamma-glutamyl phosphate reductase.